The following is a 206-amino-acid chain: GTP cyclohydrolase 1 (206 aa).

The Zn(2+) site is built by Cys-95, His-98, and Cys-166.

This sequence belongs to the GTP cyclohydrolase I family. In terms of assembly, toroid-shaped homodecamer, composed of two pentamers of five dimers.

The catalysed reaction is GTP + H2O = 7,8-dihydroneopterin 3'-triphosphate + formate + H(+). The protein operates within cofactor biosynthesis; 7,8-dihydroneopterin triphosphate biosynthesis; 7,8-dihydroneopterin triphosphate from GTP: step 1/1. The sequence is that of GTP cyclohydrolase 1 from Bartonella quintana (strain Toulouse) (Rochalimaea quintana).